The following is a 682-amino-acid chain: Potassium-transporting ATPase ATP-binding subunit (682 aa).

Helical transmembrane passes span 34-54 (PVMFVVWAGSVLTTLLTLAMV), 62-82 (ALFTGVISLWLWFTVLFANFA), 219-239 (IALTILLIALTIVFLLATATL), and 254-274 (VLVALLVCLIPTTIGGLLSAI). The active-site 4-aspartylphosphate intermediate is Asp-307. ATP-binding positions include Asp-344, Glu-348, 377-384 (FTAQSRMS), and Lys-395. Asp-518 and Asp-522 together coordinate Mg(2+). Transmembrane regions (helical) follow at residues 588-608 (FAIIPAAFAATYPQLNALNVM), 616-636 (AILSAVIFNALIIIFLIPLAL), and 662-682 (LVVPFIGIKVIDVLLTLLGLA).

The protein belongs to the cation transport ATPase (P-type) (TC 3.A.3) family. Type IA subfamily. As to quaternary structure, the system is composed of three essential subunits: KdpA, KdpB and KdpC.

Its subcellular location is the cell inner membrane. The enzyme catalyses K(+)(out) + ATP + H2O = K(+)(in) + ADP + phosphate + H(+). Its function is as follows. Part of the high-affinity ATP-driven potassium transport (or Kdp) system, which catalyzes the hydrolysis of ATP coupled with the electrogenic transport of potassium into the cytoplasm. This subunit is responsible for energy coupling to the transport system and for the release of the potassium ions to the cytoplasm. The protein is Potassium-transporting ATPase ATP-binding subunit of Salmonella schwarzengrund (strain CVM19633).